The following is a 397-amino-acid chain: HTH-type transcriptional regulator GalR (397 aa).

2 HTH lysR-type domains span residues 7-64 and 99-156; these read PNLM…MRLT and FQAR…LQPT. 2 consecutive DNA-binding regions (H-T-H motif) follow at residues 24–43 and 116–135; these read VSRA…RAIA and MQTV…AALK.

This sequence belongs to the LysR transcriptional regulatory family.

In terms of biological role, transcriptional regulator for the galBCD and galTAP operons, encoding genes of the gallate degradation pathway. This Pseudomonas putida (strain ATCC 47054 / DSM 6125 / CFBP 8728 / NCIMB 11950 / KT2440) protein is HTH-type transcriptional regulator GalR (galR).